The sequence spans 354 residues: WASH complex subunit 3 (354 aa).

Residues 76-354 (SSANVPVHNT…DDDDDDDESW (279 aa)) are disordered. The segment covering 107–143 (IPPPPPPPPPPMTGVPPPPPPPPPPPISKSNIPPPPA) has biased composition (pro residues). Positions 150–159 (ESDDDDEDNN) are enriched in acidic residues. Positions 213–244 (PQPPQPQPQSPSPQPPPPPTTTSSIPVPPPPF) are enriched in pro residues. Acidic residues predominate over residues 251 to 260 (SDDDDDDDEG). A compositionally biased stretch (low complexity) spans 277 to 290 (NNNSNSNSYSNNNN). 2 stretches are compositionally biased toward acidic residues: residues 293-307 (DDDD…DDDN) and 342-354 (DADD…DESW).

This sequence belongs to the CCDC53 family. Probable component of the WASH complex.

This chain is WASH complex subunit 3, found in Dictyostelium discoideum (Social amoeba).